A 297-amino-acid chain; its full sequence is Polyamine aminopropyltransferase 2 (297 aa).

The 233-residue stretch at 26–258 folds into the PABS domain; sequence FYWEPDVEGG…DLWTFFVALK (233 aa). Glutamine 53 is a binding site for S-methyl-5'-thioadenosine. Spermidine contacts are provided by histidine 84 and glutamate 108. S-methyl-5'-thioadenosine-binding positions include aspartate 128 and 157 to 158; that span reads DV. Aspartate 176 acts as the Proton acceptor in catalysis. Proline 184 serves as a coordination point for S-methyl-5'-thioadenosine.

The protein belongs to the spermidine/spermine synthase family. Homodimer or homotetramer.

It is found in the cytoplasm. The catalysed reaction is S-adenosyl 3-(methylsulfanyl)propylamine + putrescine = S-methyl-5'-thioadenosine + spermidine + H(+). It participates in amine and polyamine biosynthesis; spermidine biosynthesis; spermidine from putrescine: step 1/1. In terms of biological role, catalyzes the irreversible transfer of a propylamine group from the amino donor S-adenosylmethioninamine (decarboxy-AdoMet) to putrescine (1,4-diaminobutane) to yield spermidine. This chain is Polyamine aminopropyltransferase 2, found in Caldanaerobacter subterraneus subsp. tengcongensis (strain DSM 15242 / JCM 11007 / NBRC 100824 / MB4) (Thermoanaerobacter tengcongensis).